The sequence spans 308 residues: D-alanine--D-alanine ligase (308 aa).

The ATP-grasp domain maps to 102 to 302 (KHVAKAAGIP…FGEFLRWMVE (201 aa)). 128-183 (PMKPPYVVKPVREGSSFGVVIVKEDQSHPPQVITSSEWRYGDRVMVERYIAGREFT) provides a ligand contact to ATP. Residues Asp-252, Glu-269, and Asn-271 each contribute to the Mg(2+) site.

This sequence belongs to the D-alanine--D-alanine ligase family. It depends on Mg(2+) as a cofactor. Mn(2+) serves as cofactor.

The protein resides in the cytoplasm. It carries out the reaction 2 D-alanine + ATP = D-alanyl-D-alanine + ADP + phosphate + H(+). It participates in cell wall biogenesis; peptidoglycan biosynthesis. Cell wall formation. This is D-alanine--D-alanine ligase from Rhizobium meliloti (strain 1021) (Ensifer meliloti).